The primary structure comprises 272 residues: HMP-PP phosphatase (272 aa).

The Nucleophile role is filled by D8. Residues D8, D10, and D212 each contribute to the Mg(2+) site.

The protein belongs to the HAD-like hydrolase superfamily. Cof family. The cofactor is Mg(2+).

It catalyses the reaction 4-amino-2-methyl-5-(diphosphooxymethyl)pyrimidine + H2O = 4-amino-2-methyl-5-(phosphooxymethyl)pyrimidine + phosphate + H(+). Functionally, catalyzes the hydrolysis of 4-amino-2-methyl-5-hydroxymethylpyrimidine pyrophosphate (HMP-PP) to 4-amino-2-methyl-5-hydroxymethylpyrimidine phosphate (HMP-P). This Escherichia coli O8 (strain IAI1) protein is HMP-PP phosphatase.